Here is a 460-residue protein sequence, read N- to C-terminus: Flavonol 3-O-glucosyltransferase (460 aa).

H23 (proton acceptor) is an active-site residue. H23 and Q88 together coordinate an anthocyanidin. D123 (charge relay) is an active-site residue. T145 is a UDP-alpha-D-glucose binding site. An an anthocyanidin-binding site is contributed by H154. The UDP-alpha-D-glucose site is built by A339, Q341, H356, W359, N360, S361, and E364. Residue G379 participates in an anthocyanidin binding. Residues D380 and Q381 each coordinate UDP-alpha-D-glucose.

This sequence belongs to the UDP-glycosyltransferase family.

It carries out the reaction a flavonol + UDP-alpha-D-glucose = a flavonol 3-O-beta-D-glucoside + UDP + H(+). The enzyme catalyses quercetin + UDP-alpha-D-glucose = quercetin 3-O-beta-D-glucoside + UDP + H(+). It participates in flavonoid metabolism. Its function is as follows. Flavonol 3-O-glucosyltransferase that catalyzes the transfer of glucose from UDP-glucose to the 3-OH position of quercetin and kaempferol. Possesses high quercetin 3-O-glucosyltransferase activity in vitro. Catalyzes the glycosylation of anthocyanins from UDP-glucose. Also active in vitro on benzoates and benzoate derivatives. This Arabidopsis thaliana (Mouse-ear cress) protein is Flavonol 3-O-glucosyltransferase.